A 1046-amino-acid polypeptide reads, in one-letter code: MTNFRLNLLAYSVMLGLTAGVAYAAQPTNQPTNQPTNQPTNQDGNVSEQLEQINVLGSDNHNDNTPPKIAETIKTAKKPEKEQAQDVKDLVRYETGITVVEAGRFGNSGFAVRGVDENRVAVQIDGLHQAETISSQGFKELFEGYGNFNNTRNTAEIETLKQVTIRKGADSLKSGSGALGGSVSFDTKDARDYLLNKNYYASYKRGYNTADNQNLQTLTLAGRYKYFDAIAVITSRKGHELENYGYKNYNDRIQGREREKADPYRRTQESKLLKFAFQPTENHRLSVVVDLYKQTSKGHDFSYTLKQNTEHMTYDEVELRHTNDKVDRKNLAFTYENFTETPFWDTLKISYSHQKITTTARTDDYCDGNDKCALAGNPLGMKYNQDNQLVGEDGNLAKYKDINTKQTIHEKLPFTKPNEKWRYNRVDWDALKKKYPGVPIYASCIEENNDPSKYCSYDVEIPKKENTFEINGKQYDLLSEADKNVISDEQRLPTNSSYLFSCDGLNCDKDTIQGFEKKGTTVNIPFVVIEKNGKKYAKTEAVANNQLSGPYIFMPSKTGYQTNLWTQRDLTSETKQINLDLTKHLELGKTQHDLSYGGLWSEMEKSMTNISGDSPMNVKWWAQYPHSCDIFLPSSTPNGAPTLNPERTNTLCNNSNVYSFLIPVKTKTGALYFINDFRVNSHIAFNFGYRYDRVKYDPEYIPGKTPKIPDDMVVNLYVKQPTFDDTKVNLPPEELRKKEANAAANIKAIVQPKKFSASSYSVGTTLDPLNWLRLQAKYGKAFRAPTSDEIYFTFLHPDFSIRPNRDLQAETAKTKELALTLHNEIGYVTTSVFDTRYRNFIDLAYKGLYNVQRHSKLTPYHTYQNVNRPNAKVTGWEIAAQISLGKITQFLNGLNLSYKYTYQKGRIDGNIPMNAIQPKTSVYGVSYAHPADKFGLDLYFTHVSAKNAEDTYNMFYKEEGKKDSTIKWRSKSYTTIDLLGYIKPIKNLTLRAGVYNLTNRKYITWDSARSIRPFGTSNMINQKTGEGINRFYAPGRNYRMSVQFEF.

A signal peptide spans 1-24 (MTNFRLNLLAYSVMLGLTAGVAYA). Repeat copies occupy residues 26–29 (QPTN), 30–33 (QPTN), 34–37 (QPTN), and 38–41 (QPTN). The tract at residues 26–41 (QPTNQPTNQPTNQPTN) is 4 X 4 AA tandem repeats of Q-P-T-N. A TonB box motif is present at residues 51 to 58 (EQINVLGS). Positions 61–188 (HNDNTPPKIA…LGGSVSFDTK (128 aa)) constitute a TBDR plug domain. Positions 196–1046 (NKNYYASYKR…NYRMSVQFEF (851 aa)) constitute a TBDR beta-barrel domain. The TonB C-terminal box signature appears at 1029–1046 (NRFYAPGRNYRMSVQFEF).

It belongs to the TonB-dependent receptor family. Hemoglobin/haptoglobin binding protein subfamily.

The protein resides in the cell outer membrane. Its function is as follows. Acts as a receptor for the hemoglobin/haptoglobin complex of the human host and is required for heme uptake. Does not bind hemoglobin alone. This Haemophilus influenzae protein is Hemoglobin-haptoglobin-binding protein A (hhuA).